Consider the following 135-residue polypeptide: Interleukin-4 (135 aa).

An N-terminal signal peptide occupies residues 1–24 (MGLTSQLIPVLVCLLACTSHFVHG). Cystine bridges form between Cys-27–Cys-135, Cys-48–Cys-85, and Cys-70–Cys-105. 2 N-linked (GlcNAc...) asparagine glycosylation sites follow: Asn-62 and Asn-96.

Belongs to the IL-4/IL-13 family.

The protein localises to the secreted. Its function is as follows. Participates in at least several B-cell activation processes as well as of other cell types. It is a costimulator of DNA-synthesis. It induces the expression of class II MHC molecules on resting B-cells. It enhances both secretion and cell surface expression of IgE and IgG1. It also regulates the expression of the low affinity Fc receptor for IgE (CD23) on both lymphocytes and monocytes. Positively regulates IL31RA expression in macrophages. Stimulates autophagy in dendritic cells by interfering with mTORC1 signaling and through the induction of RUFY4. In Cervus elaphus (Red deer), this protein is Interleukin-4 (IL4).